A 569-amino-acid chain; its full sequence is Potassium-transporting ATPase potassium-binding subunit (569 aa).

10 helical membrane passes run glycine 5–valine 25, glycine 65–leucine 85, leucine 135–leucine 155, leucine 179–proline 199, leucine 254–phenylalanine 274, alanine 286–glutamate 306, glycine 383–glycine 403, leucine 422–leucine 442, methionine 489–glycine 509, and glycine 528–phenylalanine 548.

Belongs to the KdpA family. As to quaternary structure, the system is composed of three essential subunits: KdpA, KdpB and KdpC.

The protein localises to the cell inner membrane. Functionally, part of the high-affinity ATP-driven potassium transport (or Kdp) system, which catalyzes the hydrolysis of ATP coupled with the electrogenic transport of potassium into the cytoplasm. This subunit binds the periplasmic potassium ions and delivers the ions to the membrane domain of KdpB through an intramembrane tunnel. The chain is Potassium-transporting ATPase potassium-binding subunit from Caulobacter sp. (strain K31).